A 1050-amino-acid polypeptide reads, in one-letter code: MDAAGRGCHLLPLPAARGPARAPAASSALSPTGLCSGTTSASFAAAGAVAMNPSSSAGEERGATGGSSSSGSGAGSCCLGAEGGADPRGAGAAAAAALEEPAAAGQKEKEEALEEKLRDLTFRKQVSYRKAISRTGLQHLAPAHPLGLPVANGPAKEPRATLDWSENAVNGEHLWLETNVSGDLCYLGEENCQVRFAKSALRRKCAVCKIVVHTACIEQLEKINFRCKPTFREGGSRSPRENFVRHHWVHRRRQEGKCKQCGKGFQQKFSFHSKEIVAISCSWCKQAFHNKVTCFMLHHIEEPCSLGAHAAVIVPPTWIIKVKKPQNSLKASNRKKKRTSFKRKASKRGTEQETKGRPFVIKPISSPLMKPLLVFVNPKSGGNQGTKVLQMFMWYLNPRQVFDLSQEGPKDALEMYRKVPNLRILACGGDGTVGWILSILDELQLSPQPPVGVLPLGTGNDLARTLNWGGGYTDEPVSKILCQVEDGTIVQLDRWNLHVERNPDLPPEELEDGVCKLPLNVFNNYFSLGFDAHVTLEFHESREANPEKFNSRFRNKMFYAGAAFSDFLQRSSRDLSKHVKVVCDGTDLTPKIQDLKFQCIVFLNIPRYCAGTMPWGNPGDHHDFEPQRHDDGYIEVIGFTMASLAALQVGGHGERLHQCREVMLLTYKSIPMQVDGEPCRLAPAMIRISLRNQANMVQKSKRRTSMPLLNDPQSVPDRLRIRVNKISLQDYEGLHYDKDKLREASIPLGILVVRGDCDLETCRMYIDRLQEDLQSVSSGSQRVHYQDQETSFPRALSAQRLSPRWCFLDATSADRFYRIDRSQEHLHFVMEISHDEIFILDPDMVVSQQAGTPPGMPDLVVEQASGLSDWWNPALRKRMLSDSGMITPHYEDSDLKDFSHSRVLQSPVSSEDHAILQAVLTGDLMKLMESYKNGGSLLIQGPGHCSLLHYAAKTGNGDIVKYILDHGPAELLDMADSETGETALHKAACQRNRAVCQLLVDAGASLRQTDSKGKTPQERAQQAGDPDLAAYLESRQNYKIIGHEDLETAV.

3 disordered regions span residues 53-74 (PSSS…GSGA), 92-111 (AAAA…EKEE), and 328-356 (SLKA…ETKG). The span at 92–105 (AAAAAALEEPAAAG) shows a compositional bias: low complexity. Residues 332 to 347 (SNRKKKRTSFKRKASK) are compositionally biased toward basic residues. One can recognise a DAGKc domain in the interval 367-502 (PLMKPLLVFV…DRWNLHVERN (136 aa)). 2 ANK repeats span residues 943–972 (GHCS…AELL) and 979–1008 (TGET…SLRQ). Positions 1048 to 1050 (TAV) match the PDZ-binding motif.

It belongs to the eukaryotic diacylglycerol kinase family. In terms of assembly, interacts (via PDZ-binding motif) with DLG4; controls the localization of DGKI to the synapse. Interacts (via PDZ-binding motif) with DLG1. Interacts (via PDZ-binding motif) with DLG2. Interacts (via PDZ-binding motif) with DLG3. May interact with RASGRP3; involved in the regulation of RASGRP3 activity. In brain, expressed in the hippocampus and cerebellum with stronger expression in the Purkinje cell layer (at protein level). Expressed in kidney.

The protein resides in the cell projection. It is found in the axon. It localises to the dendrite. The protein localises to the presynapse. Its subcellular location is the postsynapse. The protein resides in the postsynaptic density. It is found in the synaptic cell membrane. It localises to the cytoplasmic vesicle. The protein localises to the secretory vesicle. Its subcellular location is the synaptic vesicle membrane. The protein resides in the cytoplasm. It is found in the cytosol. It localises to the nucleus. The enzyme catalyses a 1,2-diacyl-sn-glycerol + ATP = a 1,2-diacyl-sn-glycero-3-phosphate + ADP + H(+). It carries out the reaction 1,2-di-(9Z-octadecenoyl)-sn-glycerol + ATP = 1,2-di-(9Z-octadecenoyl)-sn-glycero-3-phosphate + ADP + H(+). The catalysed reaction is 1-octadecanoyl-2-(5Z,8Z,11Z,14Z-eicosatetraenoyl)-sn-glycerol + ATP = 1-octadecanoyl-2-(5Z,8Z,11Z,14Z-eicosatetraenoyl)-sn-glycero-3-phosphate + ADP + H(+). It catalyses the reaction 1-octadecanoyl-2-(9Z,12Z)-octadecadienoyl-sn-glycerol + ATP = 1-octadecanoyl-2-(9Z,12Z-octadecadienoyl)-sn-glycero-3-phosphate + ADP + H(+). The protein operates within lipid metabolism; glycerolipid metabolism. In terms of biological role, diacylglycerol kinase that converts diacylglycerol/DAG into phosphatidic acid/phosphatidate/PA and regulates the respective levels of these two bioactive lipids. Thereby, acts as a central switch between the signaling pathways activated by these second messengers with different cellular targets and opposite effects in numerous biological processes. Has probably no preference for any of the diacylglycerols in terms of the acyl chain composition, especially for the acyl chain at the sn-2 position. By controlling the diacylglycerol/DAG-mediated activation of RASGRP3, negatively regulates the Rap1 signaling pathway. May play a role in presynaptic diacylglycerol/DAG signaling and control neurotransmitter release during metabotropic glutamate receptor-dependent long-term depression. The polypeptide is Diacylglycerol kinase iota (Mus musculus (Mouse)).